Here is a 232-residue protein sequence, read N- to C-terminus: Large ribosomal subunit protein uL1 (232 aa).

This sequence belongs to the universal ribosomal protein uL1 family. In terms of assembly, part of the 50S ribosomal subunit.

Its function is as follows. Binds directly to 23S rRNA. The L1 stalk is quite mobile in the ribosome, and is involved in E site tRNA release. In terms of biological role, protein L1 is also a translational repressor protein, it controls the translation of the L11 operon by binding to its mRNA. This Azobacteroides pseudotrichonymphae genomovar. CFP2 protein is Large ribosomal subunit protein uL1.